Consider the following 149-residue polypeptide: MRCPFCQSDDTKVLDTRLIDDGSQVRRRRECVSCGERYSTRETVDLNLPHLIKSDDSREAFSEDKLRSGLLKALEKRPVKTSQIETSIARIELKLMTQADREVSCIKIGEWVMEELKALDKVAYIRFMSVYRQFQDIEAFKKEIDRLMR.

Residues 3 to 34 fold into a zinc finger; sequence CPFCQSDDTKVLDTRLIDDGSQVRRRRECVSC. The region spanning 49-139 is the ATP-cone domain; that stretch reads PHLIKSDDSR…VYRQFQDIEA (91 aa).

This sequence belongs to the NrdR family. Zn(2+) serves as cofactor.

In terms of biological role, negatively regulates transcription of bacterial ribonucleotide reductase nrd genes and operons by binding to NrdR-boxes. In Ruthia magnifica subsp. Calyptogena magnifica, this protein is Transcriptional repressor NrdR.